Here is a 202-residue protein sequence, read N- to C-terminus: ATP-dependent Clp protease proteolytic subunit (202 aa).

The active-site Nucleophile is Ser106. His131 is an active-site residue.

It belongs to the peptidase S14 family. In terms of assembly, fourteen ClpP subunits assemble into 2 heptameric rings which stack back to back to give a disk-like structure with a central cavity, resembling the structure of eukaryotic proteasomes.

It is found in the cytoplasm. It catalyses the reaction Hydrolysis of proteins to small peptides in the presence of ATP and magnesium. alpha-casein is the usual test substrate. In the absence of ATP, only oligopeptides shorter than five residues are hydrolyzed (such as succinyl-Leu-Tyr-|-NHMec, and Leu-Tyr-Leu-|-Tyr-Trp, in which cleavage of the -Tyr-|-Leu- and -Tyr-|-Trp bonds also occurs).. In terms of biological role, cleaves peptides in various proteins in a process that requires ATP hydrolysis. Has a chymotrypsin-like activity. Plays a major role in the degradation of misfolded proteins. The sequence is that of ATP-dependent Clp protease proteolytic subunit from Shewanella sp. (strain MR-7).